We begin with the raw amino-acid sequence, 224 residues long: Lipoprotein-releasing system ATP-binding protein LolD (224 aa).

Residues 5-224 (LEILDVSKCY…SLSGGMLTEL (220 aa)) enclose the ABC transporter domain. 40 to 47 (GSSGSGKS) contacts ATP.

This sequence belongs to the ABC transporter superfamily. Lipoprotein translocase (TC 3.A.1.125) family. The complex is composed of two ATP-binding proteins (LolD) and two transmembrane proteins (LolC and LolE).

The protein localises to the cell inner membrane. Part of the ABC transporter complex LolCDE involved in the translocation of mature outer membrane-directed lipoproteins, from the inner membrane to the periplasmic chaperone, LolA. Responsible for the formation of the LolA-lipoprotein complex in an ATP-dependent manner. This chain is Lipoprotein-releasing system ATP-binding protein LolD, found in Anaplasma marginale (strain St. Maries).